We begin with the raw amino-acid sequence, 50 residues long: uncharacterized protein (50 aa).

The protein localises to the mitochondrion. This is an uncharacterized protein from Saccharomyces cerevisiae (strain ATCC 204508 / S288c) (Baker's yeast).